The sequence spans 469 residues: Mitochondrial adenyl nucleotide antiporter SLC25A25 (469 aa).

Positions 1-165 (MLCLCLYVPV…LYWKHSTIFD (165 aa)) are regulatory N-terminal domain. At 1–189 (MLCLCLYVPV…ERQTGMWWRH (189 aa)) the chain is on the mitochondrial intermembrane side. EF-hand domains are found at residues 47 to 80 (TYRQ…QDHE), 78 to 113 (DHEK…LGVK), and 114 to 149 (ISEQ…HPVE). 5 residues coordinate Ca(2+): Asp-60, Asp-62, Asp-64, Gln-66, and Glu-71. Residues 151–160 (IPEIILYWKH) are linker region. The C-terminal transmembrane transporter domain stretch occupies residues 166–469 (VGENLTVPDE…LKITLGVQSR (304 aa)). Solcar repeat units follow at residues 184–270 (GMWW…IKRL), 278–363 (LRIH…LKNA), and 375–463 (PGVF…LKIT). The helical transmembrane segment at 190–207 (LVAGGGAGAVSRTCTAPL) threads the bilayer. The Mitochondrial matrix portion of the chain corresponds to 208–244 (DRLKVLMQVHASRSNNMGIVGGFTQMIREGGARSLWR). The chain crosses the membrane as a helical span at residues 245–264 (GNGINVLKIAPESAIKFMAY). Topologically, residues 265 to 287 (EQIKRLVGSDQETLRIHERLVAG) are mitochondrial intermembrane. Residues 288 to 301 (SLAGAIAQSSIYPM) traverse the membrane as a helical segment. The Mitochondrial matrix portion of the chain corresponds to 302-337 (EVLKTRMALRKTGQYSGMLDCARRILAREGVAAFYK). The helical transmembrane segment at 338–357 (GYVPNMLGIIPYAGIDLAVY) threads the bilayer. The Mitochondrial intermembrane segment spans residues 358-380 (ETLKNAWLQHYAVNSADPGVFVL). Residues 381-398 (LACGTMSSTCGQLASYPL) form a helical membrane-spanning segment. The Mitochondrial matrix segment spans residues 399-437 (ALVRTRMQAQASIEGAPEVTMSSLFKHILRTEGAFGLYR). The helical transmembrane segment at 438-457 (GLAPNFMKVIPAVSISYVVY) threads the bilayer. Topologically, residues 458–469 (ENLKITLGVQSR) are mitochondrial intermembrane.

Belongs to the mitochondrial carrier (TC 2.A.29) family. As to expression, widely expressed. Expressed in fetal and adult liver, skeletal muscle, testis, ovary, hippocampus and caudate nucleus. Expressed in all tissues tested. In terms of tissue distribution, expression is restricted to kidney and lung.

Its subcellular location is the mitochondrion inner membrane. It carries out the reaction Mg(2+)(out) + phosphate(in) + ATP(out) = Mg(2+)(in) + phosphate(out) + ATP(in). Activated by an increase in cytosolic calcium levels that induce a conformational change of the N-terminal regulatory domain, uncapping the channel and allowing transport. Functionally, electroneutral antiporter that most probably mediates the transport of adenyl nucleotides through the inner mitochondrial membrane. Originally identified as an ATP-magnesium/inorganic phosphate antiporter, it could have a broader specificity for adenyl nucleotides. By regulating the mitochondrial matrix adenyl nucleotide pool could adapt to changing cellular energetic demands and indirectly regulate adenyl nucleotide-dependent metabolic pathways. This is Mitochondrial adenyl nucleotide antiporter SLC25A25 from Homo sapiens (Human).